The following is an 86-amino-acid chain: Small ribosomal subunit protein eS21 (86 aa).

Belongs to the eukaryotic ribosomal protein eS21 family. In terms of assembly, component of the 40S small ribosomal subunit.

It localises to the cytoplasm. It is found in the cytosol. Its subcellular location is the rough endoplasmic reticulum. In Suberites domuncula (Sponge), this protein is Small ribosomal subunit protein eS21 (RPS21).